We begin with the raw amino-acid sequence, 232 residues long: Triosephosphate isomerase (232 aa).

6–8 (NFK) contacts substrate. Residue H86 is the Electrophile of the active site. Residue E155 is the Proton acceptor of the active site. Substrate contacts are provided by G161 and S191.

Belongs to the triosephosphate isomerase family. In terms of assembly, homodimer.

Its subcellular location is the cytoplasm. The enzyme catalyses D-glyceraldehyde 3-phosphate = dihydroxyacetone phosphate. The protein operates within carbohydrate biosynthesis; gluconeogenesis. It participates in carbohydrate degradation; glycolysis; D-glyceraldehyde 3-phosphate from glycerone phosphate: step 1/1. Its function is as follows. Involved in the gluconeogenesis. Catalyzes stereospecifically the conversion of dihydroxyacetone phosphate (DHAP) to D-glyceraldehyde-3-phosphate (G3P). This is Triosephosphate isomerase from Nitratiruptor sp. (strain SB155-2).